The primary structure comprises 432 residues: Glycerophosphocholine acyltransferase 1 (432 aa).

Over 1–110 the chain is Cytoplasmic; it reads MYKLDNNDID…DSIFFKNSSR (110 aa). The residue at position 78 (Ser-78) is a Phosphoserine. The chain crosses the membrane as a helical span at residues 111–131; that stretch reads LEKAFYPFTLFNIFFIGFLMG. Residue Arg-132 is a topological domain, lumenal. The helical transmembrane segment at 133–153 threads the bilayer; it reads FPEWFHVYYTILFFVLMPIRF. Topologically, residues 154-162 are cytoplasmic; sequence YTYYKTKNH. A helical membrane pass occupies residues 163 to 183; it reads YFLADFCYFVNMLCLLFIWIF. At 184–187 the chain is on the lumenal side; the sequence is PYSY. The chain crosses the membrane as a helical span at residues 188-208; that stretch reads SLFQSCFAFTFGTLCFAVITW. The Cytoplasmic portion of the chain corresponds to 209–221; sequence RNSLVIHSIDKTT. A helical transmembrane segment spans residues 222–242; that stretch reads SCFIHIIPPCVMYVIYHGLPL. Residues 243-263 lie on the Lumenal side of the membrane; the sequence is EYKIERFPGAIIQSELDIKKN. A helical transmembrane segment spans residues 264–284; it reads ILWTSLYYLVWQSLYHYFITL. Over 285–318 the chain is Cytoplasmic; it reads KKSSKIKSGERMTSFEYLTTHQFKNFWAVKLRSP. The chain crosses the membrane as a helical span at residues 319-339; the sequence is WPMIIYTLSQYFYQLFTMLLC. Topologically, residues 340–346 are lumenal; that stretch reads GIWIRYK. Residues 347-369 traverse the membrane as a helical segment; that stretch reads LAAALFLTIVFLWASHNGATYYI. At 370 to 432 the chain is on the cytoplasmic side; the sequence is DHYGKNFEKE…DSSSVSSKSD (63 aa). The disordered stretch occupies residues 413-432; it reads LNVNRDEDFDDSSSVSSKSD.

It belongs to the GPC1 family.

It is found in the membrane. It carries out the reaction sn-glycerol 3-phosphocholine + an acyl-CoA = a 1-acyl-sn-glycero-3-phosphocholine + CoA. The enzyme catalyses sn-glycero-3-phosphoethanolamine + an acyl-CoA = a monoacyl-sn-glycero-3-phosphoethanolamine + CoA. It catalyses the reaction sn-glycero-3-phosphoethanolamine + (9Z)-octadecenoyl-CoA = (9Z-octadecenoyl)-sn-glycero-3-phosphoethanolamine + CoA. The catalysed reaction is sn-glycerol 3-phosphocholine + hexadecanoyl-CoA = hexadecanoyl-sn-glycero-3-phosphocholine + CoA. It carries out the reaction (9Z,12Z)-octadecadienoyl-CoA + sn-glycerol 3-phosphocholine = (9Z,12Z-octadecadienoyl)-sn-glycero-3-phosphocholine + CoA. The enzyme catalyses (12R)-hydroxy-(9Z)-octadecenoyl-CoA + sn-glycerol 3-phosphocholine = (12R-hydroxy-9Z-octadecenoyl)-sn-glycero-3-phosphocholine + CoA. It catalyses the reaction (9Z,12Z,15Z)-octadecatrienoyl-CoA + sn-glycerol 3-phosphocholine = (9Z,12Z,15Z-octadecatrienoyl)-sn-glycero-3-phosphocholine + CoA. The catalysed reaction is sn-glycerol 3-phosphocholine + (9Z)-octadecenoyl-CoA = (9Z-octadecenoyl)-sn-glycero-3-phosphocholine + CoA. It carries out the reaction 1-(9Z-octadecenoyl)-sn-glycero-3-phosphoethanolamine + sn-glycerol 3-phosphocholine = (9Z-octadecenoyl)-sn-glycero-3-phosphocholine + sn-glycero-3-phosphoethanolamine. With respect to regulation, the GPCAT activity is sensitive to N-ethylmaleimide, phenanthroline, and divalent cations including Ca(2+), Mg(2+), Mn(2+) and Zn(2+). The activity is also inhibited by glycerol-3-phosphate (G3P). Its function is as follows. Glycerophosphocholine acyltransferase (GPCAT) that utilizes acyl-CoA to acylate glycero-3-phosphocholine (GPC), forming lysophosphatidylcholine (LPC). Shows broad acyl specificities with a preference for 16:0-CoA, polyunsaturated acyl-CoA, and the hydroxylated ricinoleoyl-CoA. Also catalyzes the acylation of glycero-3-phosphoethanolamine (GPE) with acyl-CoA. In addition to acyl-CoA, GPCAT efficiently utilizes LPC and lysophosphatidylethanolamine (LPE) as acyl donors in the acylation of GPC. Contributes to the maintenance of phosphatidylcholine (PC) homeostasis and might also have specific functions in acyl editing of PC, such as transferring acyl groups modified at the sn-2 position of PC to the sn-1. Involved in postsynthetic PC remodeling that produces more saturated PC species. This chain is Glycerophosphocholine acyltransferase 1, found in Saccharomyces cerevisiae (strain ATCC 204508 / S288c) (Baker's yeast).